The primary structure comprises 261 residues: Cytosolic Fe-S cluster assembly factor Nubp2 homolog (261 aa).

An ATP-binding site is contributed by 14–21 (GKGGVGKS). C188 and C191 together coordinate [4Fe-4S] cluster.

Belongs to the Mrp/NBP35 ATP-binding proteins family. NUBP2/CFD1 subfamily. In terms of assembly, heterotetramer of 2 Nubp1 and 2 Nubp2 chains. The cofactor is [4Fe-4S] cluster.

The protein localises to the cytoplasm. Its function is as follows. Component of the cytosolic iron-sulfur (Fe/S) protein assembly (CIA) machinery. Required for maturation of extramitochondrial Fe-S proteins. The Nubp1-Nubp2 heterotetramer forms a Fe-S scaffold complex, mediating the de novo assembly of an Fe-S cluster and its transfer to target apoproteins. In Drosophila willistoni (Fruit fly), this protein is Cytosolic Fe-S cluster assembly factor Nubp2 homolog.